Here is an 809-residue protein sequence, read N- to C-terminus: Origin of replication complex subunit 1A (809 aa).

The span at 1–47 (MASSLSSKAKTFKSPTKTPTKMYRKSYLSPSSTSLTPPQTPETLTPL) shows a compositional bias: low complexity. The disordered stretch occupies residues 1–69 (MASSLSSKAK…LGNDPIDLPG (69 aa)). Residues 160–185 (DPEIEDCQICFKSHTNTIMIECDDCL) form a histone H3 binding region. Residues 163 to 213 (IEDCQICFKSHTNTIMIECDDCLGGFHLNCLKPPLKEVPEGDWICQFCEVK) form a PHD-type zinc finger. Residues cysteine 166, cysteine 169, cysteine 181, cysteine 184, histidine 189, and cysteine 192 each contribute to the Zn(2+) site. Residues 201–205 (PEGDW) are histone H3 binding. Residues cysteine 207 and cysteine 210 each contribute to the Zn(2+) site. In terms of domain architecture, BAH spans 223 to 341 (PKPPEGKKLA…VHWGSFKRVA (119 aa)). The histone H3 binding stretch occupies residues 316–321 (ASNDGD). The segment at 431-799 (PKSLPCRSKE…DDVAFALKDN (369 aa)) is necessary and sufficient for ORC complex assembly. Residues 466–473 (GVPGTGKT) and 466–474 (GVPGTGKTI) each bind ATP. Mg(2+)-binding residues include aspartate 556 and glutamate 557. ATP contacts are provided by glutamate 557, asparagine 590, and arginine 655.

It belongs to the ORC1 family. Component of the origin recognition complex (ORC) composed of at least ORC1 (ORC1A or ORC1B), ORC2, ORC3, ORC4, ORC5 and ORC6. ORC is regulated in a cell-cycle and development dependent manner. It is sequentially assembled at the exit from anaphase of mitosis and disassembled as cells enter S phase. Interacts directly with ORC2, ORC3, ORC4 and ORC5. Binds mostly unmodified histone H3, and, with lower efficiency, H3K4me1 H3K4me2 and H3K4me3. As to expression, follow a cell-cycle regulation with a peak at the G1/S-phase. Mostly expressed in siliques, flowers and flower buds, and, to a lower extent, in roots, leaves and stems.

It is found in the nucleus. Its function is as follows. Essential protein. Component of the origin recognition complex (ORC) that binds origins of replication. It has a role in both chromosomal replication and mating type transcriptional silencing. Binds to the ARS consensus sequence (ACS) of origins of replication. H3K4me3 effector that positively regulates the transcription of a subset of genes. The chain is Origin of replication complex subunit 1A from Arabidopsis thaliana (Mouse-ear cress).